Consider the following 309-residue polypeptide: Methionyl-tRNA formyltransferase (309 aa).

109-112 (SLLP) contacts (6S)-5,6,7,8-tetrahydrofolate.

Belongs to the Fmt family.

It catalyses the reaction L-methionyl-tRNA(fMet) + (6R)-10-formyltetrahydrofolate = N-formyl-L-methionyl-tRNA(fMet) + (6S)-5,6,7,8-tetrahydrofolate + H(+). Its function is as follows. Attaches a formyl group to the free amino group of methionyl-tRNA(fMet). The formyl group appears to play a dual role in the initiator identity of N-formylmethionyl-tRNA by promoting its recognition by IF2 and preventing the misappropriation of this tRNA by the elongation apparatus. This chain is Methionyl-tRNA formyltransferase, found in Clostridium perfringens (strain 13 / Type A).